The chain runs to 952 residues: MAKAISLEEIKNETVDLEKIPIEEVFEQLKCTREGLSADEGASRLQIFGPNKLEEKNESKILKFLGFMWNPLSWVMEAAAVMAIALANGDGKPPDWQDFIGIICLLVINSTISFIEENNAGNAAAALMAGLAPKTKVLRDGRWSEQEAAILVPGDIISVKLGDIIPADARLLEGDPLKIDQSALTGESLPVTKNPGDEVFSGSTCKQGELEAVVIATGVHTFFGKAAHLVDSTNNVGHFQKVLTAIGNFCICSIAIGMLVEIIVMYPIQHRKYRDGIDNLLVLLIGGIPIAMPTVLSVTMAIGSHRLSQQGAITKRMTAIEEMAGMDVLCSDKTGTLTLNKLSVDRNLVEVFAKGVDKEYVLLLAARASRVENQDAIDACMVGMLADPKEARAGIREVHFLPFNPVDKRTALTYIDNNNNWHRASKGAPEQILDLCNAKEDVRRKVHSMMDKYAERGLRSLAVARRTVPEKSKESPGGRWEFVGLLPLFDPPRHDSAETIRRALNLGVNVKMITGDQLAIAKETGRRLGMGTNMYPSASLLGQDKDSAIASLPIEELIEKADGFAGVFPEHKYEIVKKLQERKHIVGMTGDGVNDAPALKKADIGIAVADATDAARGASDIVLTEPGLSVIISAVLTSRAIFQRMKNYTIYAVSITIRIVFGFMFIALIWKYDFSAFMVLIIAILNDGTIMTISKDRVKPSPMPDSWKLKEIFATGVVLGGYQALMTVVFFWAMHDTDFFSDKFGVKSLRNSDEEMMSALYLQVSIISQALIFVTRSRSWSFLERPGMLLVIAFMIAQLVATLIAVYANWAFARVKGCGWGWAGVIWLYSIIFYLPLDIMKFAIRYILSGKAWNNLLDNKTAFTTKKDYGKEEREAQWALAQRTLHGLQPPEATNLFNEKNSYRELSEIAEQAKRRAEMARLRELHTLKGHVESVVKLKGLDIETIQQHYTV.

Residues 1 to 64 (MAKAISLEEI…EKNESKILKF (64 aa)) are Cytoplasmic-facing. The helical transmembrane segment at 65–84 (LGFMWNPLSWVMEAAAVMAI) threads the bilayer. Residues 85-96 (ALANGDGKPPDW) are Extracellular-facing. Residues 97-117 (QDFIGIICLLVINSTISFIEE) form a helical membrane-spanning segment. At 118–246 (NNAGNAAAAL…GHFQKVLTAI (129 aa)) the chain is on the cytoplasmic side. A helical transmembrane segment spans residues 247–267 (GNFCICSIAIGMLVEIIVMYP). Residues 268–277 (IQHRKYRDGI) are Extracellular-facing. A helical transmembrane segment spans residues 278–299 (DNLLVLLIGGIPIAMPTVLSVT). Topologically, residues 300 to 646 (MAIGSHRLSQ…TSRAIFQRMK (347 aa)) are cytoplasmic. The 4-aspartylphosphate intermediate role is filled by Asp332. The Mg(2+) site is built by Asp591 and Asp595. A helical membrane pass occupies residues 647 to 668 (NYTIYAVSITIRIVFGFMFIAL). Residues 669–673 (IWKYD) lie on the Extracellular side of the membrane. Residues 674–696 (FSAFMVLIIAILNDGTIMTISKD) traverse the membrane as a helical segment. Topologically, residues 697-712 (RVKPSPMPDSWKLKEI) are cytoplasmic. A helical membrane pass occupies residues 713–733 (FATGVVLGGYQALMTVVFFWA). Topologically, residues 734 to 754 (MHDTDFFSDKFGVKSLRNSDE) are extracellular. Residues 755–775 (EMMSALYLQVSIISQALIFVT) traverse the membrane as a helical segment. Residues 776-787 (RSRSWSFLERPG) lie on the Cytoplasmic side of the membrane. A helical membrane pass occupies residues 788-808 (MLLVIAFMIAQLVATLIAVYA). Residues 809–817 (NWAFARVKG) are Extracellular-facing. A helical membrane pass occupies residues 818–838 (CGWGWAGVIWLYSIIFYLPLD). The Cytoplasmic segment spans residues 839–952 (IMKFAIRYIL…IETIQQHYTV (114 aa)).

The protein belongs to the cation transport ATPase (P-type) (TC 3.A.3) family. Type IIIA subfamily. As to expression, expressed at high levels in root, stem, leaf and flower.

It is found in the cell membrane. It catalyses the reaction ATP + H2O + H(+)(in) = ADP + phosphate + 2 H(+)(out). Functionally, the plasma membrane ATPase of plants and fungi is a hydrogen ion pump. The proton gradient it generates drives the active transport of nutrients by H(+)-symport. The resulting external acidification and/or internal alkinization may mediate growth responses. The protein is Plasma membrane ATPase 4 (PMA4) of Nicotiana plumbaginifolia (Leadwort-leaved tobacco).